We begin with the raw amino-acid sequence, 180 residues long: Large ribosomal subunit protein uL5 (180 aa).

It belongs to the universal ribosomal protein uL5 family. As to quaternary structure, part of the 50S ribosomal subunit; part of the 5S rRNA/L5/L18/L25 subcomplex. Contacts the 5S rRNA and the P site tRNA. Forms a bridge to the 30S subunit in the 70S ribosome.

Its function is as follows. This is one of the proteins that bind and probably mediate the attachment of the 5S RNA into the large ribosomal subunit, where it forms part of the central protuberance. In the 70S ribosome it contacts protein S13 of the 30S subunit (bridge B1b), connecting the 2 subunits; this bridge is implicated in subunit movement. Contacts the P site tRNA; the 5S rRNA and some of its associated proteins might help stabilize positioning of ribosome-bound tRNAs. This Moorella thermoacetica (strain ATCC 39073 / JCM 9320) protein is Large ribosomal subunit protein uL5.